The chain runs to 184 residues: Endoribonuclease YbeY (184 aa).

2 stretches are compositionally biased toward acidic residues: residues 1 to 11 (MTVEVGADENP) and 19 to 29 (DGAGDESDDED). A disordered region spans residues 1-38 (MTVEVGADENPDFAHDETDGAGDESDDEDAQGRDPELD). His-146, His-150, and His-156 together coordinate Zn(2+).

This sequence belongs to the endoribonuclease YbeY family. Zn(2+) is required as a cofactor.

It is found in the cytoplasm. Functionally, single strand-specific metallo-endoribonuclease involved in late-stage 70S ribosome quality control and in maturation of the 3' terminus of the 16S rRNA. The polypeptide is Endoribonuclease YbeY (Burkholderia pseudomallei (strain K96243)).